Consider the following 95-residue polypeptide: Aspartyl/glutamyl-tRNA(Asn/Gln) amidotransferase subunit C (95 aa).

This sequence belongs to the GatC family. As to quaternary structure, heterotrimer of A, B and C subunits.

It carries out the reaction L-glutamyl-tRNA(Gln) + L-glutamine + ATP + H2O = L-glutaminyl-tRNA(Gln) + L-glutamate + ADP + phosphate + H(+). The catalysed reaction is L-aspartyl-tRNA(Asn) + L-glutamine + ATP + H2O = L-asparaginyl-tRNA(Asn) + L-glutamate + ADP + phosphate + 2 H(+). Allows the formation of correctly charged Asn-tRNA(Asn) or Gln-tRNA(Gln) through the transamidation of misacylated Asp-tRNA(Asn) or Glu-tRNA(Gln) in organisms which lack either or both of asparaginyl-tRNA or glutaminyl-tRNA synthetases. The reaction takes place in the presence of glutamine and ATP through an activated phospho-Asp-tRNA(Asn) or phospho-Glu-tRNA(Gln). In Alcanivorax borkumensis (strain ATCC 700651 / DSM 11573 / NCIMB 13689 / SK2), this protein is Aspartyl/glutamyl-tRNA(Asn/Gln) amidotransferase subunit C.